The sequence spans 115 residues: Succinate dehydrogenase assembly factor 3, mitochondrial (115 aa).

The protein belongs to the complex I LYR family. SDHAF3 subfamily. In terms of assembly, interacts with the iron-sulfur protein subunit within the SDH catalytic dimer.

It localises to the mitochondrion matrix. In terms of biological role, plays an essential role in the assembly of succinate dehydrogenase (SDH), an enzyme complex (also referred to as respiratory complex II) that is a component of both the tricarboxylic acid (TCA) cycle and the mitochondrial electron transport chain, and which couples the oxidation of succinate to fumarate with the reduction of ubiquinone (coenzyme Q) to ubiquinol. Promotes maturation of the iron-sulfur protein subunit of the SDH catalytic dimer, protecting it from the deleterious effects of oxidants. May act together with SDHAF1. This Nematostella vectensis (Starlet sea anemone) protein is Succinate dehydrogenase assembly factor 3, mitochondrial (acn9).